Consider the following 778-residue polypeptide: Endonuclease MutS2 (778 aa).

328 to 335 (GPNTGGKT) contributes to the ATP binding site. The Smr domain occupies 703–778 (LDLRGKRYEE…GSGCTIANLG (76 aa)).

Belongs to the DNA mismatch repair MutS family. MutS2 subfamily. Homodimer. Binds to stalled ribosomes, contacting rRNA.

Its function is as follows. Endonuclease that is involved in the suppression of homologous recombination and thus may have a key role in the control of bacterial genetic diversity. Acts as a ribosome collision sensor, splitting the ribosome into its 2 subunits. Detects stalled/collided 70S ribosomes which it binds and splits by an ATP-hydrolysis driven conformational change. Acts upstream of the ribosome quality control system (RQC), a ribosome-associated complex that mediates the extraction of incompletely synthesized nascent chains from stalled ribosomes and their subsequent degradation. Probably generates substrates for RQC. In Streptococcus equi subsp. equi (strain 4047), this protein is Endonuclease MutS2.